A 370-amino-acid chain; its full sequence is Ubiquinone biosynthesis O-methyltransferase, mitochondrial (370 aa).

A mitochondrion-targeting transit peptide spans 1–86 (MWGGSKLSSS…SYRLPWTRPY (86 aa)). Arg-125 is a binding site for S-adenosyl-L-methionine. N6-acetyllysine is present on residues Lys-144 and Lys-150. Gly-155 and Asp-176 together coordinate S-adenosyl-L-methionine. Lys-197 carries the post-translational modification N6-acetyllysine. Ser-223 is a binding site for S-adenosyl-L-methionine. 3 residues coordinate Mg(2+): Glu-224, Glu-227, and His-228.

This sequence belongs to the class I-like SAM-binding methyltransferase superfamily. UbiG/COQ3 family. In terms of assembly, component of a multi-subunit COQ enzyme complex, composed of at least COQ3, COQ4, COQ5, COQ6, COQ7 and COQ9. Requires Mg(2+) as cofactor.

The protein resides in the mitochondrion inner membrane. The catalysed reaction is 3,4-dihydroxy-5-(all-trans-decaprenyl)benzoate + S-adenosyl-L-methionine = 4-hydroxy-3-methoxy-5-(all-trans-decaprenyl)benzoate + S-adenosyl-L-homocysteine + H(+). It catalyses the reaction a 3-demethylubiquinone + S-adenosyl-L-methionine = a ubiquinone + S-adenosyl-L-homocysteine. It carries out the reaction 3-demethylubiquinol-10 + S-adenosyl-L-methionine = ubiquinol-10 + S-adenosyl-L-homocysteine + H(+). It participates in cofactor biosynthesis; ubiquinone biosynthesis. In terms of biological role, O-methyltransferase required for two non-consecutive steps during ubiquinone biosynthesis. Catalyzes the 2 O-methylation of 3,4-dihydroxy-5-(all-trans-decaprenyl)benzoic acid into 4-hydroxy-3-methoxy-5-(all-trans-decaprenyl)benzoic acid. Also catalyzes the last step of ubiquinone biosynthesis by mediating methylation of 3-demethylubiquinone into ubiquinone. Also able to mediate the methylation of 3-demethylubiquinol-10 into ubiquinol-10. This is Ubiquinone biosynthesis O-methyltransferase, mitochondrial from Bos taurus (Bovine).